We begin with the raw amino-acid sequence, 174 residues long: MGSVGVLIGQGFDAHRFAPAGSGRELWIAGLYWPVPDSCSEADAAKYEGIEGDSDGDVAAHALIDALLAAARLGDIGSLFGVGADAHGAGMHGIDMLQEVVAHLASNGYTPASASVAIIGNRPKIGTRRAEAEAALSAAVGCPVSVTATTTDHMGFTGHGEGIAAIANALVEKI.

A divalent metal cation is bound by residues Asp13, His15, and His61. Position 13–15 (13–15 (DAH)) interacts with 4-CDP-2-C-methyl-D-erythritol 2-phosphate. 4-CDP-2-C-methyl-D-erythritol 2-phosphate contacts are provided by residues 75–77 (DIG), 149–152 (TTTD), Phe156, and His159.

The protein belongs to the IspF family. Homotrimer. The cofactor is a divalent metal cation.

The enzyme catalyses 4-CDP-2-C-methyl-D-erythritol 2-phosphate = 2-C-methyl-D-erythritol 2,4-cyclic diphosphate + CMP. It functions in the pathway isoprenoid biosynthesis; isopentenyl diphosphate biosynthesis via DXP pathway; isopentenyl diphosphate from 1-deoxy-D-xylulose 5-phosphate: step 4/6. In terms of biological role, involved in the biosynthesis of isopentenyl diphosphate (IPP) and dimethylallyl diphosphate (DMAPP), two major building blocks of isoprenoid compounds. Catalyzes the conversion of 4-diphosphocytidyl-2-C-methyl-D-erythritol 2-phosphate (CDP-ME2P) to 2-C-methyl-D-erythritol 2,4-cyclodiphosphate (ME-CPP) with a corresponding release of cytidine 5-monophosphate (CMP). This chain is 2-C-methyl-D-erythritol 2,4-cyclodiphosphate synthase, found in Bifidobacterium longum (strain NCC 2705).